We begin with the raw amino-acid sequence, 37 residues long: Cytochrome b6-f complex subunit 7 (37 aa).

Residues 5 to 25 (IFGTAFLFIVLVPVGLALGAF) traverse the membrane as a helical segment.

This sequence belongs to the PetM family. As to quaternary structure, the 4 large subunits of the cytochrome b6-f complex are cytochrome b6, subunit IV (17 kDa polypeptide, PetD), cytochrome f and the Rieske protein, while the 4 small subunits are PetG, PetL, PetM and PetN. The complex functions as a dimer.

The protein localises to the cellular thylakoid membrane. Functionally, component of the cytochrome b6-f complex, which mediates electron transfer between photosystem II (PSII) and photosystem I (PSI), cyclic electron flow around PSI, and state transitions. This is Cytochrome b6-f complex subunit 7 from Synechococcus elongatus (strain ATCC 33912 / PCC 7942 / FACHB-805) (Anacystis nidulans R2).